Here is a 152-residue protein sequence, read N- to C-terminus: Protein-export protein SecB (152 aa).

It belongs to the SecB family. In terms of assembly, homotetramer, a dimer of dimers. One homotetramer interacts with 1 SecA dimer.

It is found in the cytoplasm. In terms of biological role, one of the proteins required for the normal export of preproteins out of the cell cytoplasm. It is a molecular chaperone that binds to a subset of precursor proteins, maintaining them in a translocation-competent state. It also specifically binds to its receptor SecA. In Rickettsia bellii (strain RML369-C), this protein is Protein-export protein SecB.